The sequence spans 1407 residues: Probable phosphoribosylformylglycinamidine synthase, chloroplastic/mitochondrial (1407 aa).

Residues 1 to 53 (MNTSQATRAALFLNGSNRQAMLLQRSSMSQLWGSVRMRTSRLSLNRTKAVSLR) constitute a chloroplast and mitochondrion transit peptide. ATP contacts are provided by residues 407 to 418 (GAETGAGGRIRD), 487 to 489 (QGY), and Ala786. Mg(2+)-binding residues include Asp787, Glu826, Asn830, and Asp989. Residue Ser991 participates in ATP binding. The Glutamine amidotransferase type-1 domain maps to 1141 to 1381 (KVAVIREEGS…LMWQFPWYPT (241 aa)). The Nucleophile role is filled by Cys1235. Catalysis depends on residues His1366 and Glu1368.

The protein in the N-terminal section; belongs to the FGAMS family.

The protein localises to the plastid. The protein resides in the chloroplast. It is found in the mitochondrion. It catalyses the reaction N(2)-formyl-N(1)-(5-phospho-beta-D-ribosyl)glycinamide + L-glutamine + ATP + H2O = 2-formamido-N(1)-(5-O-phospho-beta-D-ribosyl)acetamidine + L-glutamate + ADP + phosphate + H(+). It participates in purine metabolism; IMP biosynthesis via de novo pathway; 5-amino-1-(5-phospho-D-ribosyl)imidazole from N(2)-formyl-N(1)-(5-phospho-D-ribosyl)glycinamide: step 1/2. Essential to the male gametophyte development. Phosphoribosylformylglycinamidine synthase involved in the purines biosynthetic pathway. Catalyzes the ATP-dependent conversion of formylglycinamide ribonucleotide (FGAR) and glutamine to yield formylglycinamidine ribonucleotide (FGAM) and glutamate. This is Probable phosphoribosylformylglycinamidine synthase, chloroplastic/mitochondrial from Arabidopsis thaliana (Mouse-ear cress).